A 343-amino-acid polypeptide reads, in one-letter code: Protein RecA (343 aa).

The protein belongs to the RecA family.

It is found in the cytoplasm. Functionally, can catalyze the hydrolysis of ATP in the presence of single-stranded DNA, the ATP-dependent uptake of single-stranded DNA by duplex DNA, and the ATP-dependent hybridization of homologous single-stranded DNAs. It interacts with LexA causing its activation and leading to its autocatalytic cleavage. The chain is Protein RecA from Coxiella burnetii (strain RSA 493 / Nine Mile phase I).